An 82-amino-acid polypeptide reads, in one-letter code: Antitoxin MazE8 (82 aa).

Forms a complex with cognate toxin MazF8.

Antitoxin component of a type II toxin-antitoxin (TA) system. Its cognate toxin is MazF8. The polypeptide is Antitoxin MazE8 (mazE8) (Mycobacterium tuberculosis (strain ATCC 25618 / H37Rv)).